The following is a 401-amino-acid chain: Probable 2,3-bisphosphoglycerate-independent phosphoglycerate mutase (401 aa).

Belongs to the BPG-independent phosphoglycerate mutase family. A-PGAM subfamily.

The enzyme catalyses (2R)-2-phosphoglycerate = (2R)-3-phosphoglycerate. It participates in carbohydrate degradation; glycolysis; pyruvate from D-glyceraldehyde 3-phosphate: step 3/5. Its function is as follows. Catalyzes the interconversion of 2-phosphoglycerate and 3-phosphoglycerate. The sequence is that of Probable 2,3-bisphosphoglycerate-independent phosphoglycerate mutase from Thermotoga sp. (strain RQ2).